Consider the following 459-residue polypeptide: tRNA modification GTPase MnmE (459 aa).

(6S)-5-formyl-5,6,7,8-tetrahydrofolate-binding residues include arginine 22, glutamate 85, and arginine 124. The TrmE-type G domain occupies glycine 221–phenylalanine 380. Residue asparagine 231 coordinates K(+). Residues asparagine 231–serine 236, threonine 250–threonine 256, and aspartate 275–glycine 278 each bind GTP. Residue serine 235 participates in Mg(2+) binding. Positions 250, 252, and 255 each coordinate K(+). A Mg(2+)-binding site is contributed by threonine 256. Lysine 459 provides a ligand contact to (6S)-5-formyl-5,6,7,8-tetrahydrofolate.

The protein belongs to the TRAFAC class TrmE-Era-EngA-EngB-Septin-like GTPase superfamily. TrmE GTPase family. As to quaternary structure, homodimer. Heterotetramer of two MnmE and two MnmG subunits. It depends on K(+) as a cofactor.

The protein resides in the cytoplasm. In terms of biological role, exhibits a very high intrinsic GTPase hydrolysis rate. Involved in the addition of a carboxymethylaminomethyl (cmnm) group at the wobble position (U34) of certain tRNAs, forming tRNA-cmnm(5)s(2)U34. This chain is tRNA modification GTPase MnmE, found in Staphylococcus aureus (strain bovine RF122 / ET3-1).